Here is a 212-residue protein sequence, read N- to C-terminus: Large ribosomal subunit protein uL3 (212 aa).

The residue at position 153 (Q153) is an N5-methylglutamine.

Belongs to the universal ribosomal protein uL3 family. As to quaternary structure, part of the 50S ribosomal subunit. Forms a cluster with proteins L14 and L19. Post-translationally, methylated by PrmB.

In terms of biological role, one of the primary rRNA binding proteins, it binds directly near the 3'-end of the 23S rRNA, where it nucleates assembly of the 50S subunit. This chain is Large ribosomal subunit protein uL3, found in Acinetobacter baylyi (strain ATCC 33305 / BD413 / ADP1).